Reading from the N-terminus, the 195-residue chain is Coagulogen (195 aa).

Positions 1 to 20 (MEKKLLGIAILFVTVVSVLA) are cleaved as a signal peptide. 8 disulfides stabilise this stretch: C28–C188, C30–C115, C80–C182, C85–C141, C95–C189, C108–C161, C147–C191, and C155–C193.

The protein belongs to the coagulin family. As to quaternary structure, coagulogen is cleaved after Arg-38 and Arg-66 by a clotting enzyme contained in the hemocyte and activated by a bacterial endotoxin (lipopolysaccharide). This cleavage releases the peptide C and leaves 2 chains of coagulin, A and B, linked by two disulfide bonds. Coagulin molecules interlink to form a gel. As to expression, hemolymph.

Its subcellular location is the secreted. Functionally, coagulogen is a gel-forming protein of hemolymph; it hinders the spread of invaders by immobilizing them. The polypeptide is Coagulogen (Limulus polyphemus (Atlantic horseshoe crab)).